Consider the following 425-residue polypeptide: Serine--tRNA ligase (425 aa).

The segment at 108 to 134 is disordered; the sequence is YPNLPSEACPDGRSEDDNKEVRRWGDP. The segment covering 117–134 has biased composition (basic and acidic residues); it reads PDGRSEDDNKEVRRWGDP. 233–235 contacts L-serine; it reads TAE. Position 264 to 266 (264 to 266) interacts with ATP; the sequence is RRE. Glu-287 lines the L-serine pocket. ATP is bound at residue 351-354; that stretch reads EISS. Ser-385 is an L-serine binding site.

The protein belongs to the class-II aminoacyl-tRNA synthetase family. Type-1 seryl-tRNA synthetase subfamily. In terms of assembly, homodimer. The tRNA molecule binds across the dimer.

The protein localises to the cytoplasm. The enzyme catalyses tRNA(Ser) + L-serine + ATP = L-seryl-tRNA(Ser) + AMP + diphosphate + H(+). It carries out the reaction tRNA(Sec) + L-serine + ATP = L-seryl-tRNA(Sec) + AMP + diphosphate + H(+). It functions in the pathway aminoacyl-tRNA biosynthesis; selenocysteinyl-tRNA(Sec) biosynthesis; L-seryl-tRNA(Sec) from L-serine and tRNA(Sec): step 1/1. In terms of biological role, catalyzes the attachment of serine to tRNA(Ser). Is also able to aminoacylate tRNA(Sec) with serine, to form the misacylated tRNA L-seryl-tRNA(Sec), which will be further converted into selenocysteinyl-tRNA(Sec). The chain is Serine--tRNA ligase from Synechococcus sp. (strain CC9311).